The primary structure comprises 132 residues: Small ribosomal subunit protein uS11 (132 aa).

This sequence belongs to the universal ribosomal protein uS11 family. Part of the 30S ribosomal subunit. Interacts with proteins S7 and S18. Binds to IF-3.

Its function is as follows. Located on the platform of the 30S subunit, it bridges several disparate RNA helices of the 16S rRNA. Forms part of the Shine-Dalgarno cleft in the 70S ribosome. The polypeptide is Small ribosomal subunit protein uS11 (Legionella pneumophila (strain Paris)).